A 193-amino-acid chain; its full sequence is dCTP deaminase (193 aa).

DCTP-binding positions include R110–R115, D128, V136–E138, Y171, K178, and Q182. E138 serves as the catalytic Proton donor/acceptor. Positions R169–D193 are disordered.

Belongs to the dCTP deaminase family. In terms of assembly, homotrimer.

The catalysed reaction is dCTP + H2O + H(+) = dUTP + NH4(+). The protein operates within pyrimidine metabolism; dUMP biosynthesis; dUMP from dCTP (dUTP route): step 1/2. Catalyzes the deamination of dCTP to dUTP. The sequence is that of dCTP deaminase from Serratia proteamaculans (strain 568).